We begin with the raw amino-acid sequence, 1314 residues long: Angiotensin-converting enzyme (1314 aa).

The signal sequence occupies residues 1-35; that stretch reads MGAASGQRGQGPPSPLLLLWLSLLLLLLPPSPAPA. Topologically, residues 36 to 1265 are extracellular; the sequence is LDPGLQPGNF…LEPQQARVGQ (1230 aa). N-linked (GlcNAc...) asparagine glycosylation is found at N44, N60, N80, N117, and N166. 2 consecutive Peptidase M2 domains span residues 46-630 and 649-1228; these read SADE…LGWP and VTDE…LGWP. A disulfide bridge links C163 with C171. A chloride-binding site is contributed by Y237. N324 carries N-linked (GlcNAc...) asparagine glycosylation. C365 and C383 are disulfide-bonded. H396 serves as a coordination point for Zn(2+). E397 (proton acceptor 1) is an active-site residue. H400 and E424 together coordinate Zn(2+). A glycan (N-linked (GlcNAc...) asparagine) is linked at N515. H526 (proton donor 1) is an active-site residue. A chloride-binding site is contributed by R535. A disulfide bond links C551 and C563. 4 N-linked (GlcNAc...) asparagine glycosylation sites follow: N683, N701, N720, and N766. Residues C763 and C769 are joined by a disulfide bond. Positions 797 and 835 each coordinate chloride. Residue N948 is glycosylated (N-linked (GlcNAc...) asparagine). C963 and C981 are joined by a disulfide. Zn(2+) is bound at residue H994. E995 functions as the Proton acceptor 2 in the catalytic mechanism. Zn(2+)-binding residues include H998 and E1022. The chloride site is built by W1096 and R1100. Catalysis depends on H1124, which acts as the Proton donor 2. R1133 serves as a coordination point for chloride. A disulfide bridge connects residues C1149 and C1161. N1197 carries an N-linked (GlcNAc...) asparagine glycan. A juxtamembrane stalk region spans residues 1221–1262; sequence HGETLGWPEYNWTPNTARSEGPFPESGRVNFLGMYLEPQQAR. A helical membrane pass occupies residues 1266–1282; it reads WVLLFLGVSLLVATLGL. At 1283–1314 the chain is on the cytoplasmic side; it reads THRLFSIRQHGHSLHRPHRGPQFGSEVELRHS. Residues 1293–1314 are disordered; it reads GHSLHRPHRGPQFGSEVELRHS. At S1307 the chain carries Phosphoserine.

The protein belongs to the peptidase M2 family. In terms of assembly, monomer and homodimer; homodimerizes following binding to an inhibitor. Interacts with calmodulin (CALM1, CALM2 or CALM3); interaction takes place in the cytoplasmic region and regulates phosphorylation and proteolytic cleavage. Requires Zn(2+) as cofactor. It depends on chloride as a cofactor. In terms of processing, produced following proteolytic cleavage by secretase enzymes that cleave the transmembrane form in the juxtamembrane stalk region upstream of the transmembrane region. Cleavage can take place at different sites of the juxtamembrane stalk region. Post-translationally, phosphorylated by CK2 on Ser-1307; which allows membrane retention. Phosphorylated on tyrosine residues on its extracellular part, promoting cleavage by secretase enzymes and formation of the soluble form (Angiotensin-converting enzyme, soluble form). Widely expressed with dominant expression in lung and kidney.

It localises to the cell membrane. It is found in the cytoplasm. The protein resides in the secreted. The enzyme catalyses Release of a C-terminal dipeptide, oligopeptide-|-Xaa-Yaa, when Xaa is not Pro, and Yaa is neither Asp nor Glu. Thus, conversion of angiotensin I to angiotensin II, with increase in vasoconstrictor activity, but no action on angiotensin II.. The catalysed reaction is angiotensin I + H2O = L-histidyl-L-leucine + angiotensin II. It catalyses the reaction bradykinin + H2O = L-Phe-L-Arg + bradykinin(1-7). It carries out the reaction substance P + H2O = substance P(1-9) + L-Leu-L-Met-NH2. The enzyme catalyses substance P + H2O = substance P(1-8) + Gly-L-Leu-L-Met-NH2. The catalysed reaction is substance P + H2O = L-Phe-L-Phe-Gly-L-Leu-L-Met-NH2 + substance P(1-6). It catalyses the reaction neurotensin + H2O = neurotensin(1-11) + L-isoleucyl-L-leucine. It carries out the reaction goralatide + H2O = N-acetyl-L-seryl-L-aspartate + L-lysyl-L-proline. The enzyme catalyses Met-enkephalin + H2O = L-phenylalanyl-L-methionine + L-tyrosylglycylglycine. The catalysed reaction is Leu-enkephalin + H2O = L-tyrosylglycylglycine + L-phenylalanyl-L-leucine. It catalyses the reaction Met-enkephalin-Arg-Phe + H2O = L-arginyl-L-phenylalanine + Met-enkephalin. With respect to regulation, the dipeptidyl carboxypeptidase activity is strongly activated by chloride. The dipeptidyl carboxypeptidase activity is specifically inhibited by lisinopril, captopril and enalaprilat. Strongly inhibited by lisinopril and captopril. In terms of biological role, dipeptidyl carboxypeptidase that removes dipeptides from the C-terminus of a variety of circulating hormones, such as angiotensin I, bradykinin or enkephalins, thereby playing a key role in the regulation of blood pressure, electrolyte homeostasis or synaptic plasticity. Composed of two similar catalytic domains, each possessing a functional active site, with different selectivity for substrates. Plays a major role in the angiotensin-renin system that regulates blood pressure and sodium retention by the kidney by converting angiotensin I to angiotensin II, resulting in an increase of the vasoconstrictor activity of angiotensin. Also able to inactivate bradykinin, a potent vasodilator, and therefore enhance the blood pressure response. Acts as a regulator of synaptic transmission by mediating cleavage of neuropeptide hormones, such as substance P, neurotensin or enkephalins. Catalyzes degradation of different enkephalin neuropeptides (Met-enkephalin, Leu-enkephalin, Met-enkephalin-Arg-Phe and possibly Met-enkephalin-Arg-Gly-Leu). Acts as a regulator of synaptic plasticity in the nucleus accumbens of the brain by mediating cleavage of Met-enkephalin-Arg-Phe, a strong ligand of Mu-type opioid receptor OPRM1, into Met-enkephalin. Met-enkephalin-Arg-Phe cleavage by ACE decreases activation of OPRM1, leading to long-term synaptic potentiation of glutamate release. Also acts as a regulator of hematopoietic stem cell differentiation by mediating degradation of hemoregulatory peptide N-acetyl-SDKP (AcSDKP). Acts as a regulator of cannabinoid signaling pathway by mediating degradation of hemopressin, an antagonist peptide of the cannabinoid receptor CNR1. Involved in amyloid-beta metabolism by catalyzing degradation of Amyloid-beta protein 40 and Amyloid-beta protein 42 peptides, thereby preventing plaque formation. Catalyzes cleavage of cholecystokinin (maturation of Cholecystokinin-8 and Cholecystokinin-5) and Gonadoliberin-1 (both maturation and degradation) hormones. Degradation of hemoregulatory peptide N-acetyl-SDKP (AcSDKP) and amyloid-beta proteins is mediated by the N-terminal catalytic domain, while angiotensin I and cholecystokinin cleavage is mediated by the C-terminal catalytic region. Functionally, soluble form that is released in blood plasma and other body fluids following proteolytic cleavage in the juxtamembrane stalk region. Isoform produced by alternative promoter usage that is specifically expressed in spermatocytes and adult testis, and which is required for male fertility. In contrast to somatic isoforms, only contains one catalytic domain. Acts as a dipeptidyl carboxypeptidase that removes dipeptides from the C-terminus of substrates. The identity of substrates that are needed for male fertility is unknown. May also have a glycosidase activity which releases GPI-anchored proteins from the membrane by cleaving the mannose linkage in the GPI moiety. The GPIase activity was reported to be essential for the egg-binding ability of the sperm. This activity is however unclear and has been challenged by other groups, suggesting that it may be indirect. The sequence is that of Angiotensin-converting enzyme from Mesocricetus auratus (Golden hamster).